A 340-amino-acid chain; its full sequence is uncharacterized protein (340 aa).

Residues 1–25 (MLGIRAMLVMLDYYWIQLITNNDTR) form the signal peptide. Over 26-225 (SNNTDTIFVS…RRYMYLFSVS (200 aa)) the chain is Lumenal. 12 N-linked (GlcNAc...) asparagine; by host glycosylation sites follow: N27, N54, N57, N68, N72, N78, N83, N107, N118, N146, N173, and N180. Residues 226 to 246 (CAGITGTVSIILVSLSLLILI) form a helical membrane-spanning segment. The Cytoplasmic segment spans residues 247 to 340 (CYYRCGRLLI…PMHMVVCMPA (94 aa)).

The protein belongs to the HHV-5 UL20 protein family.

It is found in the host endoplasmic reticulum membrane. This is an uncharacterized protein from Human cytomegalovirus (strain AD169) (HHV-5).